The following is a 221-amino-acid chain: Ribonuclease T (221 aa).

An Exonuclease domain is found at 20-194 (VVIDIETAGF…YDTLQTANLF (175 aa)). Mg(2+)-binding residues include D23, E25, H181, and D186. H181 serves as the catalytic Proton donor/acceptor.

It belongs to the RNase T family. Homodimer. It depends on Mg(2+) as a cofactor.

In terms of biological role, trims short 3' overhangs of a variety of RNA species, leaving a one or two nucleotide 3' overhang. Responsible for the end-turnover of tRNA: specifically removes the terminal AMP residue from uncharged tRNA (tRNA-C-C-A). Also appears to be involved in tRNA biosynthesis. The protein is Ribonuclease T of Buchnera aphidicola subsp. Acyrthosiphon pisum (strain APS) (Acyrthosiphon pisum symbiotic bacterium).